The primary structure comprises 148 residues: Cyanate hydratase (148 aa).

Active-site residues include arginine 89, glutamate 92, and serine 115.

This sequence belongs to the cyanase family.

It carries out the reaction cyanate + hydrogencarbonate + 3 H(+) = NH4(+) + 2 CO2. Its function is as follows. Catalyzes the reaction of cyanate with bicarbonate to produce ammonia and carbon dioxide. In Sulfurisphaera tokodaii (strain DSM 16993 / JCM 10545 / NBRC 100140 / 7) (Sulfolobus tokodaii), this protein is Cyanate hydratase.